The following is a 311-amino-acid chain: MGNFQLEDFVAGWIGGAASVIVGHPLDTVKARLQAGSGYGSTLSCIRTVYRRESVFGFFKGMSFPLASIAVYNSVVFGVFSNTQRFLSHHRCQEPEAGPPHVLSDLLLASMVAGVVSVGLGAPVDLIEIRLQMQTQPFQEANLGLKPRVAALGEQPAYQGPVHCFATIVRTEGLAGLYRGASAMLLRDVPGYCLYFIPYVFLSDWITPEACAGPSPCAVWLAGGMAGAISWGTATPMDVVKSRLQADGVYVNKYRGVLDCMSQSYQKEGLKVFFRGITVNAVRGFPMSAAMFLGYELSLQAIRGDHVVTSP.

3 Solcar repeats span residues 3–86, 100–205, and 214–301; these read NFQL…TQRF, PHVL…LSDW, and PSPC…SLQA. The next 6 helical transmembrane spans lie at 9 to 29, 61 to 81, 107 to 127, 193 to 213, 217 to 237, and 277 to 295; these read FVAG…LDTV, GMSF…GVFS, LLAS…VDLI, CLYF…ACAG, CAVW…ATPM, and ITVN…FLGY.

It belongs to the mitochondrial carrier (TC 2.A.29) family.

Its subcellular location is the mitochondrion inner membrane. The polypeptide is Solute carrier family 25 member 48 (SLC25A48) (Bos taurus (Bovine)).